Here is a 154-residue protein sequence, read N- to C-terminus: Protein X (154 aa).

Residues 68–117 (PCALRFTSARRMETTVNAHQFLPKVLHKRTLGLSAMSTTDLEAYFKDCLF) are mitochondrial targeting sequence.

The protein belongs to the orthohepadnavirus protein X family. As to quaternary structure, may form homodimer. May interact with host CEBPA, CFLAR, CREB1, DDB1, E4F1, HBXIP, HSPD1/HSP60, NFKBIA, POLR2E and SMAD4. Interacts with host SMC5-SMC6 complex and induces its degradation. Interacts with host TRPC4AP; leading to prevent ubiquitination of TRPC4AP. Interacts with host PLSCR1; this interaction promotes ubiquitination and degradation of HBx and impairs HBx-mediated cell proliferation. Post-translationally, a fraction may be phosphorylated in insect cells and HepG2 cells, a human hepatoblastoma cell line. Phosphorylated in vitro by host protein kinase C or mitogen-activated protein kinase. N-acetylated in insect cells.

The protein resides in the host cytoplasm. The protein localises to the host nucleus. Its subcellular location is the host mitochondrion. In terms of biological role, multifunctional protein that plays a role in silencing host antiviral defenses and promoting viral transcription. Does not seem to be essential for HBV infection. May be directly involved in development of cirrhosis and liver cancer (hepatocellular carcinoma). Most of cytosolic activities involve modulation of cytosolic calcium. The effect on apoptosis is controversial depending on the cell types in which the studies have been conducted. May induce apoptosis by localizing in mitochondria and causing loss of mitochondrial membrane potential. May also modulate apoptosis by binding host CFLAR, a key regulator of the death-inducing signaling complex (DISC). Promotes viral transcription by using the host E3 ubiquitin ligase DDB1 to target the SMC5-SMC6 complex to proteasomal degradation. This host complex would otherwise bind to viral episomal DNA, and prevents its transcription. Moderately stimulates transcription of many different viral and cellular transcription elements. Promoters and enhancers stimulated by HBx contain DNA binding sites for NF-kappa-B, AP-1, AP-2, c-EBP, ATF/CREB, or the calcium-activated factor NF-AT. This is Protein X from Homo sapiens (Human).